Consider the following 285-residue polypeptide: DegV domain-containing protein CA_C3284 (285 aa).

Residues 3 to 280 form the DegV domain; the sequence is VKILTDSTSC…PGAIGIAYYT (278 aa). The hexadecanoate site is built by Ser-59 and Ser-91.

Its function is as follows. May bind long-chain fatty acids, such as palmitate, and may play a role in lipid transport or fatty acid metabolism. This chain is DegV domain-containing protein CA_C3284, found in Clostridium acetobutylicum (strain ATCC 824 / DSM 792 / JCM 1419 / IAM 19013 / LMG 5710 / NBRC 13948 / NRRL B-527 / VKM B-1787 / 2291 / W).